A 336-amino-acid chain; its full sequence is ATP-dependent 6-phosphofructokinase 3 (336 aa).

ATP-binding positions include Gly-10, 72–73 (RE), and 108–111 (GNGT). Asn-109 is a Mg(2+) binding site. Substrate-binding positions include 131 to 133 (TID), Arg-168, 175 to 177 (MGH), Glu-228, Arg-255, and 261 to 264 (YIQR). The active-site Proton acceptor is the Asp-133.

This sequence belongs to the phosphofructokinase type A (PFKA) family. Mixed-substrate PFK group III subfamily. As to quaternary structure, homodimer or homotetramer. It depends on Mg(2+) as a cofactor.

The protein resides in the cytoplasm. The catalysed reaction is beta-D-fructose 6-phosphate + ATP = beta-D-fructose 1,6-bisphosphate + ADP + H(+). Its pathway is carbohydrate degradation; glycolysis; D-glyceraldehyde 3-phosphate and glycerone phosphate from D-glucose: step 3/4. Its function is as follows. Catalyzes the phosphorylation of D-fructose 6-phosphate to fructose 1,6-bisphosphate by ATP, the first committing step of glycolysis. This is ATP-dependent 6-phosphofructokinase 3 from Bacteroides thetaiotaomicron (strain ATCC 29148 / DSM 2079 / JCM 5827 / CCUG 10774 / NCTC 10582 / VPI-5482 / E50).